The sequence spans 275 residues: 2,3,4,5-tetrahydropyridine-2,6-dicarboxylate N-succinyltransferase (275 aa).

It belongs to the transferase hexapeptide repeat family.

Its subcellular location is the cytoplasm. It catalyses the reaction (S)-2,3,4,5-tetrahydrodipicolinate + succinyl-CoA + H2O = (S)-2-succinylamino-6-oxoheptanedioate + CoA. It participates in amino-acid biosynthesis; L-lysine biosynthesis via DAP pathway; LL-2,6-diaminopimelate from (S)-tetrahydrodipicolinate (succinylase route): step 1/3. The sequence is that of 2,3,4,5-tetrahydropyridine-2,6-dicarboxylate N-succinyltransferase from Cupriavidus taiwanensis (strain DSM 17343 / BCRC 17206 / CCUG 44338 / CIP 107171 / LMG 19424 / R1) (Ralstonia taiwanensis (strain LMG 19424)).